We begin with the raw amino-acid sequence, 211 residues long: Adenylate kinase (211 aa).

Position 10–15 (10–15 (GSGKGT)) interacts with ATP. The NMP stretch occupies residues 30-59 (STGDLFRENILNSTALGQEIKKIVERGELV). AMP is bound by residues threonine 31, arginine 36, 57–59 (ELV), 85–88 (GFPR), and glutamine 92. An LID region spans residues 121–158 (GRRICKSCNNIFNIYTLTTKKNGICDVCGGDLYQREDD). Residue arginine 122 coordinates ATP. 2 residues coordinate Zn(2+): cysteine 125 and cysteine 128. 131 to 132 (IF) is a binding site for ATP. Positions 145 and 148 each coordinate Zn(2+). 2 residues coordinate AMP: arginine 155 and arginine 166. Valine 194 contributes to the ATP binding site.

Belongs to the adenylate kinase family. As to quaternary structure, monomer.

It is found in the cytoplasm. The catalysed reaction is AMP + ATP = 2 ADP. It functions in the pathway purine metabolism; AMP biosynthesis via salvage pathway; AMP from ADP: step 1/1. In terms of biological role, catalyzes the reversible transfer of the terminal phosphate group between ATP and AMP. Plays an important role in cellular energy homeostasis and in adenine nucleotide metabolism. This chain is Adenylate kinase, found in Borreliella burgdorferi (strain ATCC 35210 / DSM 4680 / CIP 102532 / B31) (Borrelia burgdorferi).